The following is a 629-amino-acid chain: Leucine-rich repeat protein soc-2 homolog (629 aa).

A compositionally biased stretch (low complexity) spans 1–19 (MNLCSSGATASTTSLSSTG). Positions 1 to 133 (MNLCSSGATA…PTTKKSKPIQ (133 aa)) are disordered. Positions 21 to 45 (RNGGTSEGGGEGAGGGGGSGGGGGN) are enriched in gly residues. LRR repeat units lie at residues 149–170 (GIKR…VKEC), 172–193 (HLTE…IGCL), 195–217 (NLRN…QNCK), 218–239 (QLKV…IYRL), 241–262 (TLTT…LRQL), 264–285 (NLTM…IGAL), 287–308 (NLTT…IGNC), 310–331 (NLSA…IGNL), 333–355 (SLVR…KNCK), 356–377 (SMDE…MLAS), 380–401 (GLTT…GPAQ), 404–425 (NVYS…IFSR), 428–449 (GLTK…IGTW), 451–472 (NMVE…IMNL), 474–495 (NLEI…IGNM), 497–518 (KLRI…IGLL), 520–541 (ELQR…IGHL), 543–564 (NLTH…IGSL), 566–588 (GLEN…LALC), and 590–611 (NLKY…IQAG).

The protein belongs to the SHOC2 family.

In terms of biological role, acts as a Ras effector and participates in MAPK pathway activation. Probably acts as a regulatory subunit of protein phosphatase that specifically dephosphorylates Raf kinase and stimulate Raf activity at specialized signaling complexes upon Ras activation. This Drosophila pseudoobscura pseudoobscura (Fruit fly) protein is Leucine-rich repeat protein soc-2 homolog (Sur-8).